The chain runs to 379 residues: UDP-N-acetylglucosamine--N-acetylmuramyl-(pentapeptide) pyrophosphoryl-undecaprenol N-acetylglucosamine transferase (379 aa).

Residues Thr19 to Gly21, Asn133, Arg174, Ser207, Ile261, and Gln306 each bind UDP-N-acetyl-alpha-D-glucosamine.

It belongs to the glycosyltransferase 28 family. MurG subfamily.

It localises to the cell inner membrane. It catalyses the reaction di-trans,octa-cis-undecaprenyl diphospho-N-acetyl-alpha-D-muramoyl-L-alanyl-D-glutamyl-meso-2,6-diaminopimeloyl-D-alanyl-D-alanine + UDP-N-acetyl-alpha-D-glucosamine = di-trans,octa-cis-undecaprenyl diphospho-[N-acetyl-alpha-D-glucosaminyl-(1-&gt;4)]-N-acetyl-alpha-D-muramoyl-L-alanyl-D-glutamyl-meso-2,6-diaminopimeloyl-D-alanyl-D-alanine + UDP + H(+). The protein operates within cell wall biogenesis; peptidoglycan biosynthesis. In terms of biological role, cell wall formation. Catalyzes the transfer of a GlcNAc subunit on undecaprenyl-pyrophosphoryl-MurNAc-pentapeptide (lipid intermediate I) to form undecaprenyl-pyrophosphoryl-MurNAc-(pentapeptide)GlcNAc (lipid intermediate II). This is UDP-N-acetylglucosamine--N-acetylmuramyl-(pentapeptide) pyrophosphoryl-undecaprenol N-acetylglucosamine transferase from Porphyromonas gingivalis (strain ATCC BAA-308 / W83).